Consider the following 613-residue polypeptide: Protein CER1-like 2 (613 aa).

Helical transmembrane passes span 13 to 33 (WTPL…DSIY), 44 to 64 (LLIV…ISLS), 95 to 115 (IIFN…TSTI), 122 to 142 (GVIL…YWFH), 182 to 202 (LILG…VVSI), and 322 to 342 (YLFL…SFSF). Residues 134–268 (VEFIYYWFHR…MPMYDYIYGT (135 aa)) enclose the Fatty acid hydroxylase domain.

The protein belongs to the sterol desaturase family. Not detected in any tissues.

The protein localises to the membrane. This is Protein CER1-like 2 from Arabidopsis thaliana (Mouse-ear cress).